The chain runs to 77 residues: UPF0401 protein ECP_3010 (77 aa).

The protein belongs to the UPF0401 family.

This Escherichia coli O6:K15:H31 (strain 536 / UPEC) protein is UPF0401 protein ECP_3010.